Reading from the N-terminus, the 196-residue chain is Small ribosomal subunit protein uS4c (196 aa).

Residues 16–40 (GALPGLTRKTPKSGSNLKKKFHSGK) are disordered. The region spanning 89–152 (MRLDNTLFRL…RSKDLVRNSI (64 aa)) is the S4 RNA-binding domain.

Belongs to the universal ribosomal protein uS4 family. In terms of assembly, part of the 30S ribosomal subunit. Contacts protein S5. The interaction surface between S4 and S5 is involved in control of translational fidelity.

The protein resides in the plastid. The protein localises to the chloroplast. Its function is as follows. One of the primary rRNA binding proteins, it binds directly to 16S rRNA where it nucleates assembly of the body of the 30S subunit. Functionally, with S5 and S12 plays an important role in translational accuracy. This is Small ribosomal subunit protein uS4c (rps4) from Anthoxanthum odoratum (Sweet vernal grass).